The sequence spans 428 residues: Adenylosuccinate synthetase (428 aa).

GTP-binding positions include glycine 12–lysine 18 and glycine 40–threonine 42. Aspartate 13 acts as the Proton acceptor in catalysis. Mg(2+)-binding residues include aspartate 13 and glycine 40. IMP contacts are provided by residues aspartate 13–lysine 16, asparagine 38–histidine 41, threonine 130, arginine 144, glutamine 225, threonine 240, and arginine 304. Histidine 41 acts as the Proton donor in catalysis. Residue valine 300–arginine 306 participates in substrate binding. GTP contacts are provided by residues arginine 306, lysine 332–aspartate 334, and serine 414–glycine 416.

This sequence belongs to the adenylosuccinate synthetase family. As to quaternary structure, homodimer. The cofactor is Mg(2+).

The protein localises to the cytoplasm. It carries out the reaction IMP + L-aspartate + GTP = N(6)-(1,2-dicarboxyethyl)-AMP + GDP + phosphate + 2 H(+). The protein operates within purine metabolism; AMP biosynthesis via de novo pathway; AMP from IMP: step 1/2. In terms of biological role, plays an important role in the de novo pathway of purine nucleotide biosynthesis. Catalyzes the first committed step in the biosynthesis of AMP from IMP. This Clostridium acetobutylicum (strain ATCC 824 / DSM 792 / JCM 1419 / IAM 19013 / LMG 5710 / NBRC 13948 / NRRL B-527 / VKM B-1787 / 2291 / W) protein is Adenylosuccinate synthetase.